Here is a 212-residue protein sequence, read N- to C-terminus: 3-isopropylmalate dehydratase small subunit (212 aa).

It belongs to the LeuD family. LeuD type 1 subfamily. In terms of assembly, heterodimer of LeuC and LeuD.

It carries out the reaction (2R,3S)-3-isopropylmalate = (2S)-2-isopropylmalate. Its pathway is amino-acid biosynthesis; L-leucine biosynthesis; L-leucine from 3-methyl-2-oxobutanoate: step 2/4. Functionally, catalyzes the isomerization between 2-isopropylmalate and 3-isopropylmalate, via the formation of 2-isopropylmaleate. The chain is 3-isopropylmalate dehydratase small subunit from Dechloromonas aromatica (strain RCB).